A 359-amino-acid polypeptide reads, in one-letter code: Probable dual-specificity RNA methyltransferase RlmN (359 aa).

The active-site Proton acceptor is the Glu91. One can recognise a Radical SAM core domain in the interval 97 to 329; it reads QHYGHSVCVT…KKNGVNCVVR (233 aa). Cys104 and Cys340 are oxidised to a cystine. [4Fe-4S] cluster contacts are provided by Cys111, Cys115, and Cys118. Residues 163 to 164, Ser195, 218 to 220, and Asn296 each bind S-adenosyl-L-methionine; these read GE and SLH. The S-methylcysteine intermediate role is filled by Cys340.

The protein belongs to the radical SAM superfamily. RlmN family. It depends on [4Fe-4S] cluster as a cofactor.

The protein resides in the cytoplasm. The enzyme catalyses adenosine(2503) in 23S rRNA + 2 reduced [2Fe-2S]-[ferredoxin] + 2 S-adenosyl-L-methionine = 2-methyladenosine(2503) in 23S rRNA + 5'-deoxyadenosine + L-methionine + 2 oxidized [2Fe-2S]-[ferredoxin] + S-adenosyl-L-homocysteine. The catalysed reaction is adenosine(37) in tRNA + 2 reduced [2Fe-2S]-[ferredoxin] + 2 S-adenosyl-L-methionine = 2-methyladenosine(37) in tRNA + 5'-deoxyadenosine + L-methionine + 2 oxidized [2Fe-2S]-[ferredoxin] + S-adenosyl-L-homocysteine. Specifically methylates position 2 of adenine 2503 in 23S rRNA and position 2 of adenine 37 in tRNAs. This is Probable dual-specificity RNA methyltransferase RlmN from Streptococcus pyogenes serotype M3 (strain ATCC BAA-595 / MGAS315).